Consider the following 235-residue polypeptide: Phosphoribosylaminoimidazole-succinocarboxamide synthase (235 aa).

This sequence belongs to the SAICAR synthetase family.

It carries out the reaction 5-amino-1-(5-phospho-D-ribosyl)imidazole-4-carboxylate + L-aspartate + ATP = (2S)-2-[5-amino-1-(5-phospho-beta-D-ribosyl)imidazole-4-carboxamido]succinate + ADP + phosphate + 2 H(+). Its pathway is purine metabolism; IMP biosynthesis via de novo pathway; 5-amino-1-(5-phospho-D-ribosyl)imidazole-4-carboxamide from 5-amino-1-(5-phospho-D-ribosyl)imidazole-4-carboxylate: step 1/2. The protein is Phosphoribosylaminoimidazole-succinocarboxamide synthase of Streptococcus thermophilus (strain ATCC BAA-250 / LMG 18311).